Reading from the N-terminus, the 207-residue chain is Guanylate kinase (207 aa).

The Guanylate kinase-like domain maps to 6 to 185 (GLLIVLSGPS…AKERIQSIVE (180 aa)). 13–20 (GPSGVGKG) contacts ATP.

Belongs to the guanylate kinase family.

The protein resides in the cytoplasm. The enzyme catalyses GMP + ATP = GDP + ADP. Essential for recycling GMP and indirectly, cGMP. The protein is Guanylate kinase of Staphylococcus haemolyticus (strain JCSC1435).